A 212-amino-acid polypeptide reads, in one-letter code: Tetraspanin-31-B (212 aa).

Topologically, residues 1-12 (MVCGGFTCSKNA) are cytoplasmic. A helical membrane pass occupies residues 13–33 (LCALNVVYMLVGVLLIIVAAW). Residues 34–44 (GKGFGIVSSIH) are Extracellular-facing. Residues 45-65 (IIGGVIAIGVFLLLIAIIGLI) traverse the membrane as a helical segment. Residues 66-72 (GAVSHHQ) are Cytoplasmic-facing. Residues 73–93 (VMLFIYMVVLILVFIFQFIVS) form a helical membrane-spanning segment. At 94–175 (CSCLAMNRSQ…MLNHADEALK (82 aa)) the chain is on the extracellular side. 4 N-linked (GlcNAc...) asparagine glycosylation sites follow: asparagine 100, asparagine 109, asparagine 117, and asparagine 134. Residues 176 to 196 (ILGGVGLFFSFTEILGVWLAF) form a helical membrane-spanning segment. At 197–212 (RYRNQKDPRANPSAFL) the chain is on the cytoplasmic side.

Belongs to the tetraspanin (TM4SF) family.

The protein resides in the membrane. The chain is Tetraspanin-31-B (tspan31-b) from Xenopus laevis (African clawed frog).